A 238-amino-acid polypeptide reads, in one-letter code: Ribonuclease PH (238 aa).

Phosphate contacts are provided by residues Arg-86 and 124-126 (GTR).

It belongs to the RNase PH family. Homohexameric ring arranged as a trimer of dimers.

The catalysed reaction is tRNA(n+1) + phosphate = tRNA(n) + a ribonucleoside 5'-diphosphate. In terms of biological role, phosphorolytic 3'-5' exoribonuclease that plays an important role in tRNA 3'-end maturation. Removes nucleotide residues following the 3'-CCA terminus of tRNAs; can also add nucleotides to the ends of RNA molecules by using nucleoside diphosphates as substrates, but this may not be physiologically important. Probably plays a role in initiation of 16S rRNA degradation (leading to ribosome degradation) during starvation. The protein is Ribonuclease PH of Actinobacillus pleuropneumoniae serotype 5b (strain L20).